Here is a 785-residue protein sequence, read N- to C-terminus: MSSAEMEQLLQAKTLAMHNNPTEMLPKVLETTASMYHNGNLSKLKLPLAKFFTQLVLDVVSMDSPIANTERPFIAAQYLPLLLAMAQSTADVLVYKNIVLIMCASYPLVLDLVAKTSNQEMFDQLCMLKKFVLSHWRTAYPLRATVDDETDVEQWLAQIDQNIGVKLATIKFISEVVLSQTKSPSGNEINSSTIPDNHPVLNKPALESEAKRLLDMLLNYLIEEQYMVSSVFIGIINSLSFVIKRRPQTTIRILSGLLRFNVDAKFPLEGKSDLNYKLSKRFVERAYKNFVQFGLKNQIITKSLSSGSGSSIYSKLTKISQTLHVIGEETKSKGILNFDPSKGNSKKTLSRQDKLKYISLWKRQLSALLSTLGVSTKTPTPVSAPATGSSTENMLDQLKILQKYTLNKASHQGNTFFNNSPKPISNTYSSVYSLMNSSNSNQDVTQLPNDILIKLSTEAILQMDSTKLITGLSIVASRYTDLMNTYINSVPSSSSSKRKSDDDDDGNDNEEVGNDGPTANSKKIKMETEPLAEEPEEPEDDDRMQKMLQEEESAQEISGDANKSTSAIKEIAPPFEPDSLTQDEKLKYLSKLTKKLFELSGRQDTTRAKSSSSSSILLDDDDSSSWLHVLIRLVTRGIEAQEASDLIREELLGFFIQDFEQRVSLIIEWLNEEWFFQTSLHQDPSNYKKWSLRVLESLGPFLENKHRRFFIRLMSELPSLQSDHLEALKPICLDPARSSLGFQTLKFLIMFRPPVQDTVRDLLHQLKQEDEGLHKQCDSLLDRLK.

Residues 487-544 (INSVPSSSSSKRKSDDDDDGNDNEEVGNDGPTANSKKIKMETEPLAEEPEEPEDDDRM) form a disordered region. Serine 500 carries the phosphoserine modification. 2 stretches are compositionally biased toward acidic residues: residues 502-513 (DDDDGNDNEEVG) and 530-542 (PLAE…EDDD).

In terms of assembly, component of the cleavage and polyadenylation factor (CPF) complex, which is composed of PTI1, SYC1, SSU72, GLC7, MPE1, REF2, PFS2, PTA1, YSH1/BRR5, SWD2, CFT2/YDH1, YTH1, CFT1/YHH1, FIP1 and PAP1. Component of the APT complex, which is a subcomplex of CPF, and is composed of PTI1, SYC1, SSU72, GLC7, REF2, PTA1 and SWD2.

The protein localises to the nucleus. Its function is as follows. Essential in pre-tRNA processing. Component of the cleavage and polyadenylation factor (CPF) complex, which plays a key role in polyadenylation-dependent pre-mRNA 3'-end formation and cooperates with cleavage factors including the CFIA complex and NAB4/CFIB. Component of the APT complex, which may be involved in polyadenylation-independent transcript 3'-end formation. This is Pre-tRNA-processing protein PTA1 (PTA1) from Saccharomyces cerevisiae (strain ATCC 204508 / S288c) (Baker's yeast).